Consider the following 470-residue polypeptide: UDP-N-acetylmuramoylalanine--D-glutamate ligase (470 aa).

124 to 130 lines the ATP pocket; it reads GTNGKTT.

This sequence belongs to the MurCDEF family.

The protein resides in the cytoplasm. The enzyme catalyses UDP-N-acetyl-alpha-D-muramoyl-L-alanine + D-glutamate + ATP = UDP-N-acetyl-alpha-D-muramoyl-L-alanyl-D-glutamate + ADP + phosphate + H(+). The protein operates within cell wall biogenesis; peptidoglycan biosynthesis. In terms of biological role, cell wall formation. Catalyzes the addition of glutamate to the nucleotide precursor UDP-N-acetylmuramoyl-L-alanine (UMA). The chain is UDP-N-acetylmuramoylalanine--D-glutamate ligase from Prochlorococcus marinus (strain SARG / CCMP1375 / SS120).